The primary structure comprises 82 residues: Protein WFDC11 (82 aa).

The first 21 residues, 1–21, serve as a signal peptide directing secretion; it reads MKPSWFPCLVFLCMLLLSALG.

It is found in the secreted. The sequence is that of Protein WFDC11 (Wfdc11) from Mus musculus (Mouse).